The sequence spans 294 residues: Phosphoribosylaminoimidazole-succinocarboxamide synthase (294 aa).

Belongs to the SAICAR synthetase family.

The enzyme catalyses 5-amino-1-(5-phospho-D-ribosyl)imidazole-4-carboxylate + L-aspartate + ATP = (2S)-2-[5-amino-1-(5-phospho-beta-D-ribosyl)imidazole-4-carboxamido]succinate + ADP + phosphate + 2 H(+). It functions in the pathway purine metabolism; IMP biosynthesis via de novo pathway; 5-amino-1-(5-phospho-D-ribosyl)imidazole-4-carboxamide from 5-amino-1-(5-phospho-D-ribosyl)imidazole-4-carboxylate: step 1/2. This Rhodococcus jostii (strain RHA1) protein is Phosphoribosylaminoimidazole-succinocarboxamide synthase.